We begin with the raw amino-acid sequence, 661 residues long: Heme transporter BhuA (661 aa).

Positions 1 to 23 are cleaved as a signal peptide; that stretch reads MKFTRTLVLVSTSLLATVATSQA. A TBDR plug domain is found at 48–159; it reads KDNIEATGGT…AAGAIRYETV (112 aa). In terms of domain architecture, TBDR beta-barrel spans 170 to 661; that stretch reads TFGARIIGSY…TFTFQTAFKF (492 aa).

Belongs to the TonB-dependent receptor family.

Its subcellular location is the cell outer membrane. Heme transporter playing an important role in stationary-phase iron acquisition and required for maintenance of chronic infection in mice. This Brucella abortus (strain 2308) protein is Heme transporter BhuA (bhuA).